The primary structure comprises 90 residues: NAD(P)H-quinone oxidoreductase subunit H, chloroplastic (90 aa).

The protein belongs to the complex I 49 kDa subunit family. In terms of assembly, NDH is composed of at least 16 different subunits, 5 of which are encoded in the nucleus.

The protein localises to the plastid. It is found in the chloroplast thylakoid membrane. It catalyses the reaction a plastoquinone + NADH + (n+1) H(+)(in) = a plastoquinol + NAD(+) + n H(+)(out). The catalysed reaction is a plastoquinone + NADPH + (n+1) H(+)(in) = a plastoquinol + NADP(+) + n H(+)(out). In terms of biological role, NDH shuttles electrons from NAD(P)H:plastoquinone, via FMN and iron-sulfur (Fe-S) centers, to quinones in the photosynthetic chain and possibly in a chloroplast respiratory chain. The immediate electron acceptor for the enzyme in this species is believed to be plastoquinone. Couples the redox reaction to proton translocation, and thus conserves the redox energy in a proton gradient. This chain is NAD(P)H-quinone oxidoreductase subunit H, chloroplastic (ndhH), found in Secale cereale (Rye).